The primary structure comprises 613 residues: Portal protein (613 aa).

Positions 577–613 (ATGGDHGIRQAPSARGDAEPDHAKSKPARDPPPGAGS) are disordered. Over residues 592–605 (GDAEPDHAKSKPAR) the composition is skewed to basic and acidic residues.

The protein belongs to the herpesviridae portal protein family. In terms of assembly, homododecamerizes. Interacts with terminase subunits TRM1 and TRM3.

It localises to the virion. It is found in the host nucleus. In terms of biological role, forms a portal in the viral capsid through which viral DNA is translocated during DNA packaging. Assembles as a dodecamer at a single fivefold axe of the T=16 icosahedric capsid. Binds to the molecular motor that translocates the viral DNA, termed terminase. This Homo sapiens (Human) protein is Portal protein.